We begin with the raw amino-acid sequence, 441 residues long: Trigger factor (441 aa).

A PPIase FKBP-type domain is found at G161–A246.

This sequence belongs to the FKBP-type PPIase family. Tig subfamily.

It is found in the cytoplasm. The catalysed reaction is [protein]-peptidylproline (omega=180) = [protein]-peptidylproline (omega=0). Its function is as follows. Involved in protein export. Acts as a chaperone by maintaining the newly synthesized protein in an open conformation. Functions as a peptidyl-prolyl cis-trans isomerase. The chain is Trigger factor from Desulfotalea psychrophila (strain LSv54 / DSM 12343).